We begin with the raw amino-acid sequence, 21 residues long: Major outer membrane protein (21 aa).

Disulfide bond interactions within and between MOMP molecules and other components form high molecular-weight oligomers.

It is found in the cell outer membrane. Functionally, structural rigidity of the outer membrane of elementary bodies and porin forming, permitting diffusion of solutes through the intracellular reticulate body membrane. This chain is Major outer membrane protein, found in Actinobacillus suis.